The primary structure comprises 494 residues: Cytochrome P450 2A6 (494 aa).

Substrate contacts are provided by F107 and N297. Position 439 (C439) interacts with heme.

The protein belongs to the cytochrome P450 family. Requires heme as cofactor. In terms of tissue distribution, liver.

Its subcellular location is the endoplasmic reticulum membrane. It is found in the microsome membrane. It catalyses the reaction 1,4-cineole + reduced [NADPH--hemoprotein reductase] + O2 = 2-exo-hydroxy-1,4-cineole + oxidized [NADPH--hemoprotein reductase] + H2O + H(+). Functionally, exhibits a high coumarin 7-hydroxylase activity. Can act in the hydroxylation of the anti-cancer drugs cyclophosphamide and ifosphamide. Competent in the metabolic activation of aflatoxin B1. Constitutes the major nicotine C-oxidase. Acts as a 1,4-cineole 2-exo-monooxygenase. Possesses low phenacetin O-deethylation activity. The protein is Cytochrome P450 2A6 (CYP2A6) of Homo sapiens (Human).